The following is a 99-amino-acid chain: Osteocalcin (99 aa).

The N-terminal stretch at 1–23 (MRTLSLLTLLALTAFCLSDLAGA) is a signal peptide. Positions 24-49 (KPSDSESDKAFMSKQEGSKVVNRLRR) are excised as a propeptide. One can recognise a Gla domain in the interval 50–96 (YLNNGLGAPAPYPDPLEPHREVCELNPNCDELADHIGFQDAYKRIYG). At Pro58 the chain carries Hydroxyproline. 4 residues coordinate Ca(2+): Glu66, Glu70, Glu73, and Asp79. 3 positions are modified to 4-carboxyglutamate: Glu66, Glu70, and Glu73. Residues Cys72 and Cys78 are joined by a disulfide bond.

Belongs to the osteocalcin/matrix Gla protein family. Post-translationally, gamma-carboxyglutamate residues are formed by vitamin K dependent carboxylation by GGCX. These residues are essential for the binding of calcium. Decarboxylation promotes the hormone activity.

Its subcellular location is the secreted. Its function is as follows. The carboxylated form is one of the main organic components of the bone matrix, which constitutes 1-2% of the total bone protein: it acts as a negative regulator of bone formation and is required to limit bone formation without impairing bone resorption or mineralization. The carboxylated form binds strongly to apatite and calcium. In terms of biological role, the uncarboxylated form acts as a hormone secreted by osteoblasts, which regulates different cellular processes, such as energy metabolism, male fertility and brain development. Regulates of energy metabolism by acting as a hormone favoring pancreatic beta-cell proliferation, insulin secretion and sensitivity and energy expenditure. Uncarboxylated osteocalcin hormone also promotes testosterone production in the testes: acts as a ligand for G protein-coupled receptor GPRC6A at the surface of Leydig cells, initiating a signaling response that promotes the expression of enzymes required for testosterone synthesis in a CREB-dependent manner. Also acts as a regulator of brain development: osteocalcin hormone crosses the blood-brain barrier and acts as a ligand for GPR158 on neurons, initiating a signaling response that prevents neuronal apoptosis in the hippocampus, favors the synthesis of all monoamine neurotransmitters and inhibits that of gamma-aminobutyric acid (GABA). Osteocalcin also crosses the placenta during pregnancy and maternal osteocalcin is required for fetal brain development. This Rattus norvegicus (Rat) protein is Osteocalcin (Bglap).